The chain runs to 406 residues: Acetylornithine/succinyldiaminopimelate aminotransferase (406 aa).

Pyridoxal 5'-phosphate is bound by residues G108–T109 and F141. R144 is a N(2)-acetyl-L-ornithine binding site. D226 to Q229 provides a ligand contact to pyridoxal 5'-phosphate. K255 carries the post-translational modification N6-(pyridoxal phosphate)lysine. S283 contributes to the N(2)-acetyl-L-ornithine binding site. T284 serves as a coordination point for pyridoxal 5'-phosphate.

It belongs to the class-III pyridoxal-phosphate-dependent aminotransferase family. ArgD subfamily. Homodimer. It depends on pyridoxal 5'-phosphate as a cofactor.

It is found in the cytoplasm. It carries out the reaction N(2)-acetyl-L-ornithine + 2-oxoglutarate = N-acetyl-L-glutamate 5-semialdehyde + L-glutamate. It catalyses the reaction N-succinyl-(2S,6S)-2,6-diaminopimelate + 2-oxoglutarate = (S)-2-succinylamino-6-oxoheptanedioate + L-glutamate. It functions in the pathway amino-acid biosynthesis; L-arginine biosynthesis; N(2)-acetyl-L-ornithine from L-glutamate: step 4/4. Its pathway is amino-acid biosynthesis; L-lysine biosynthesis via DAP pathway; LL-2,6-diaminopimelate from (S)-tetrahydrodipicolinate (succinylase route): step 2/3. In terms of biological role, involved in both the arginine and lysine biosynthetic pathways. The protein is Acetylornithine/succinyldiaminopimelate aminotransferase of Escherichia coli O157:H7.